We begin with the raw amino-acid sequence, 538 residues long: Putative cysteine ligase BshC (538 aa).

The stretch at 460–484 (KINEQIELLERMLKRNVEKKHEVEL) forms a coiled coil.

The protein belongs to the BshC family.

Involved in bacillithiol (BSH) biosynthesis. May catalyze the last step of the pathway, the addition of cysteine to glucosamine malate (GlcN-Mal) to generate BSH. In Bacillus cereus (strain ATCC 10987 / NRS 248), this protein is Putative cysteine ligase BshC.